The chain runs to 458 residues: Exodeoxyribonuclease 7 large subunit (458 aa).

This sequence belongs to the XseA family. As to quaternary structure, heterooligomer composed of large and small subunits.

The protein resides in the cytoplasm. The catalysed reaction is Exonucleolytic cleavage in either 5'- to 3'- or 3'- to 5'-direction to yield nucleoside 5'-phosphates.. Functionally, bidirectionally degrades single-stranded DNA into large acid-insoluble oligonucleotides, which are then degraded further into small acid-soluble oligonucleotides. This is Exodeoxyribonuclease 7 large subunit from Sodalis glossinidius (strain morsitans).